We begin with the raw amino-acid sequence, 378 residues long: Putative F-box only protein 15 (378 aa).

An F-box domain is found at 5-52 (KRVYRSLPFELVEEILKKTPAESLNRFKSTCKQWYGIITSKRFMYNHL).

The polypeptide is Putative F-box only protein 15 (FBX15) (Arabidopsis thaliana (Mouse-ear cress)).